A 634-amino-acid polypeptide reads, in one-letter code: MVRLVLPNPGLEERIPSLDELEVIEKEEAGSRPKWDNKAQYMLTCVGFCVGLGNVWRFPYLCQSHGGGAFMIPFLILLVFEGIPLLYLEFAIGQRLRKGSMGVWSSIHPALKGIGIASMFVSFMVGLYYNTIIAWVMWYFFNSFQEPLPWSECPLNQNQTGYVEECAKSSSVDYFWYRETLNISTSISDSGSIQWWILLCLTCAWSVLYVCIIRGIETTGKAVYITSTLPYVVLTIFLIRGLTLKGATNGIVFLFTPNITELSNPNTWLDAGAQVFYSFSLAFGGLISFSSYNSVHNNCEMDSVIVSVINGFTSVYAATVVYSIIGFRATERFDDCVNTNILTLINGFDLPEGNVTSENFEAYQQWCNATNPQAYAQLKFQTCDINSFLSEGVEGTGLAFIVFTEAITKMPVSPLWSVLFFIMLFCLGLSSMFGNMEGVVVPLQDLNITPKKWPKELLTGLICLGTYLIAFIFTLNSGQYWLSLLDSFAGSIPLLIIAFCEMFAVVYVYGVDRFNKDIEFMIGHKPNIFWQVTWRVVSPLIMLVIFLFFFVIEVNKTLMYSIWDPNYEEFPKSQKIPYPNWVYAVVVTVAGVPCLSIPCFAIYKFIRNCCQKSDDHHGLVNTLSTASVNGDLKN.

Residues 1–41 (MVRLVLPNPGLEERIPSLDELEVIEKEEAGSRPKWDNKAQY) are Cytoplasmic-facing. Ser-17 bears the Phosphoserine mark. A helical transmembrane segment spans residues 42–62 (MLTCVGFCVGLGNVWRFPYLC). The Extracellular segment spans residues 63-67 (QSHGG). The helical transmembrane segment at 68-88 (GAFMIPFLILLVFEGIPLLYL) threads the bilayer. The Cytoplasmic portion of the chain corresponds to 89–119 (EFAIGQRLRKGSMGVWSSIHPALKGIGIASM). The chain crosses the membrane as a helical span at residues 120–140 (FVSFMVGLYYNTIIAWVMWYF). The Extracellular portion of the chain corresponds to 141–192 (FNSFQEPLPWSECPLNQNQTGYVEECAKSSSVDYFWYRETLNISTSISDSGS). Asn-158 and Asn-182 each carry an N-linked (GlcNAc...) asparagine glycan. The helical transmembrane segment at 193 to 213 (IQWWILLCLTCAWSVLYVCII) threads the bilayer. The Cytoplasmic portion of the chain corresponds to 214–221 (RGIETTGK). The chain crosses the membrane as a helical span at residues 222–242 (AVYITSTLPYVVLTIFLIRGL). The Extracellular segment spans residues 243 to 268 (TLKGATNGIVFLFTPNITELSNPNTW). Asn-258 carries an N-linked (GlcNAc...) asparagine glycan. The chain crosses the membrane as a helical span at residues 269–289 (LDAGAQVFYSFSLAFGGLISF). The Cytoplasmic segment spans residues 290-304 (SSYNSVHNNCEMDSV). Residues 305-325 (IVSVINGFTSVYAATVVYSII) form a helical membrane-spanning segment. Residues 326-413 (GFRATERFDD…TEAITKMPVS (88 aa)) are Extracellular-facing. N-linked (GlcNAc...) asparagine glycosylation is found at Asn-354 and Asn-368. A helical transmembrane segment spans residues 414–434 (PLWSVLFFIMLFCLGLSSMFG). Over 435 to 456 (NMEGVVVPLQDLNITPKKWPKE) the chain is Cytoplasmic. The chain crosses the membrane as a helical span at residues 457–477 (LLTGLICLGTYLIAFIFTLNS). The Extracellular portion of the chain corresponds to 478-487 (GQYWLSLLDS). A helical membrane pass occupies residues 488–508 (FAGSIPLLIIAFCEMFAVVYV). The Cytoplasmic portion of the chain corresponds to 509–531 (YGVDRFNKDIEFMIGHKPNIFWQ). The helical transmembrane segment at 532–552 (VTWRVVSPLIMLVIFLFFFVI) threads the bilayer. The Extracellular portion of the chain corresponds to 553–581 (EVNKTLMYSIWDPNYEEFPKSQKIPYPNW). Asn-555 carries an N-linked (GlcNAc...) asparagine glycan. A helical membrane pass occupies residues 582-602 (VYAVVVTVAGVPCLSIPCFAI). Residues 603–634 (YKFIRNCCQKSDDHHGLVNTLSTASVNGDLKN) lie on the Cytoplasmic side of the membrane. Position 627 is a phosphoserine (Ser-627).

It belongs to the sodium:neurotransmitter symporter (SNF) (TC 2.A.22) family. SLC6A19 subfamily. Interacts in a tissue-specific manner with ACE2 in small intestine and with CLTRN in the kidney. Interacts with CLTRN; this interaction is required for trafficking of SLC6A19 to the plasma membrane and for its catalytic activation in kidneys. Interacts with ACE2; this interaction is required for trafficking of SLC6A19 to the plasma membrane and for its catalytic activation in intestine. Interacts with ANPEP; the interaction positively regulates its amino acid transporter activity. As to expression, predominantly expressed in kidney and small intestine (at protein level). Expressed in the intestinal brush border (at protein level). Expression not observed in other organs, such as lung, skeletal muscle, brain, liver and pancreas. In kidney, expression is localized in the renal cortex but not in the medulla. Substantial amounts of expression in the proximal tubules. The distal nephron segments and the glomeruli are consistently negative. In the small intestine, expression is exclusively localized in villus enterocytes. High resolution of the hybridization-positive villi reveals a gradient of expression with the highest levels in apical cells. Not detected in crypt cells or in any other cell types of the small intestine.

Its subcellular location is the cell membrane. It catalyses the reaction L-alanine(in) + Na(+)(in) = L-alanine(out) + Na(+)(out). It carries out the reaction L-cysteine(in) + Na(+)(in) = L-cysteine(out) + Na(+)(out). The catalysed reaction is L-glutamine(in) + Na(+)(in) = L-glutamine(out) + Na(+)(out). The enzyme catalyses glycine(in) + Na(+)(in) = glycine(out) + Na(+)(out). It catalyses the reaction L-isoleucine(in) + Na(+)(in) = L-isoleucine(out) + Na(+)(out). It carries out the reaction L-leucine(in) + Na(+)(in) = L-leucine(out) + Na(+)(out). The catalysed reaction is L-methionine(in) + Na(+)(in) = L-methionine(out) + Na(+)(out). The enzyme catalyses L-phenylalanine(in) + Na(+)(in) = L-phenylalanine(out) + Na(+)(out). It catalyses the reaction L-serine(in) + Na(+)(in) = L-serine(out) + Na(+)(out). It carries out the reaction L-tryptophan(in) + Na(+)(in) = L-tryptophan(out) + Na(+)(out). The catalysed reaction is L-tyrosine(in) + Na(+)(in) = L-tyrosine(out) + Na(+)(out). The enzyme catalyses L-valine(in) + Na(+)(in) = L-valine(out) + Na(+)(out). In terms of biological role, transporter that mediates resorption of neutral amino acids across the apical membrane of renal and intestinal epithelial cells. This uptake is sodium-dependent and chloride-independent. Requires CLTRN in kidney or ACE2 in intestine for cell surface expression and amino acid transporter activity. The sequence is that of Sodium-dependent neutral amino acid transporter B(0)AT1 (Slc6a19) from Mus musculus (Mouse).